We begin with the raw amino-acid sequence, 90 residues long: Protein RALF-like 3 (90 aa).

The signal sequence occupies residues M1–A29. 2 disulfides stabilise this stretch: C59–C67 and C80–C86.

It belongs to the plant rapid alkalinization factor (RALF) family.

It is found in the secreted. Its function is as follows. Cell signaling peptide that may regulate plant stress, growth, and development. Mediates a rapid alkalinization of extracellular space by mediating a transient increase in the cytoplasmic Ca(2+) concentration leading to a calcium-dependent signaling events through a cell surface receptor and a concomitant activation of some intracellular mitogen-activated protein kinases. The protein is Protein RALF-like 3 (RALFL3) of Arabidopsis thaliana (Mouse-ear cress).